A 237-amino-acid chain; its full sequence is tRNA1(Val) (adenine(37)-N6)-methyltransferase (237 aa).

The protein belongs to the methyltransferase superfamily. tRNA (adenine-N(6)-)-methyltransferase family.

It localises to the cytoplasm. It catalyses the reaction adenosine(37) in tRNA1(Val) + S-adenosyl-L-methionine = N(6)-methyladenosine(37) in tRNA1(Val) + S-adenosyl-L-homocysteine + H(+). Functionally, specifically methylates the adenine in position 37 of tRNA(1)(Val) (anticodon cmo5UAC). This chain is tRNA1(Val) (adenine(37)-N6)-methyltransferase, found in Bacteroides thetaiotaomicron (strain ATCC 29148 / DSM 2079 / JCM 5827 / CCUG 10774 / NCTC 10582 / VPI-5482 / E50).